Reading from the N-terminus, the 465-residue chain is ATP synthase subunit beta (465 aa).

148-155 (GGAGVGKT) serves as a coordination point for ATP.

Belongs to the ATPase alpha/beta chains family. In terms of assembly, F-type ATPases have 2 components, CF(1) - the catalytic core - and CF(0) - the membrane proton channel. CF(1) has five subunits: alpha(3), beta(3), gamma(1), delta(1), epsilon(1). CF(0) has three main subunits: a(1), b(2) and c(9-12). The alpha and beta chains form an alternating ring which encloses part of the gamma chain. CF(1) is attached to CF(0) by a central stalk formed by the gamma and epsilon chains, while a peripheral stalk is formed by the delta and b chains.

It is found in the cell inner membrane. It catalyses the reaction ATP + H2O + 4 H(+)(in) = ADP + phosphate + 5 H(+)(out). Its function is as follows. Produces ATP from ADP in the presence of a proton gradient across the membrane. The catalytic sites are hosted primarily by the beta subunits. This chain is ATP synthase subunit beta, found in Neisseria meningitidis serogroup C (strain 053442).